Consider the following 360-residue polypeptide: Photosystem II protein D1 2 (360 aa).

Transmembrane regions (helical) follow at residues 29 to 46 (YIGW…SATI), 118 to 133 (HFLI…EWEF), and 142 to 156 (WICV…AATA). His-118 provides a ligand contact to chlorophyll a. Tyr-126 contacts pheophytin a. Positions 170 and 189 each coordinate [CaMn4O5] cluster. A helical membrane pass occupies residues 197–218 (LHMFGVAGVFGGSLFAAMHGSL). Residue His-198 coordinates chlorophyll a. A quinone is bound by residues His-215 and 264–265 (SF). Fe cation is bound at residue His-215. His-272 is a Fe cation binding site. Residues 274–288 (FLAAWPVIGIWLTSL) traverse the membrane as a helical segment. His-332, Glu-333, Asp-342, and Ala-344 together coordinate [CaMn4O5] cluster. A propeptide spanning residues 345-360 (GTESAPVAFAAALGDG) is cleaved from the precursor.

This sequence belongs to the reaction center PufL/M/PsbA/D family. PSII is composed of 1 copy each of membrane proteins PsbA, PsbB, PsbC, PsbD, PsbE, PsbF, PsbH, PsbI, PsbJ, PsbK, PsbL, PsbM, PsbT, PsbX, Psb30/Ycf12, peripheral proteins PsbO, CyanoQ (PsbQ), PsbU, PsbV and a large number of cofactors. It forms dimeric complexes. The cofactor is The D1/D2 heterodimer binds P680, chlorophylls that are the primary electron donor of PSII, and subsequent electron acceptors. It shares a non-heme iron and each subunit binds pheophytin, quinone, additional chlorophylls, carotenoids and lipids. D1 provides most of the ligands for the Mn4-Ca-O5 cluster of the oxygen-evolving complex (OEC). There is also a Cl(-1) ion associated with D1 and D2, which is required for oxygen evolution. The PSII complex binds additional chlorophylls, carotenoids and specific lipids.. Post-translationally, tyr-161 forms a radical intermediate that is referred to as redox-active TyrZ, YZ or Y-Z. In terms of processing, C-terminally processed by CtpA; processing is essential to allow assembly of the oxygen-evolving complex and thus photosynthetic growth.

The protein localises to the cell inner membrane. The catalysed reaction is 2 a plastoquinone + 4 hnu + 2 H2O = 2 a plastoquinol + O2. Its function is as follows. Photosystem II (PSII) is a light-driven water:plastoquinone oxidoreductase that uses light energy to abstract electrons from H(2)O, generating O(2) and a proton gradient subsequently used for ATP formation. It consists of a core antenna complex that captures photons, and an electron transfer chain that converts photonic excitation into a charge separation. The D1/D2 (PsbA/PsbD) reaction center heterodimer binds P680, the primary electron donor of PSII as well as several subsequent electron acceptors. In Gloeobacter violaceus (strain ATCC 29082 / PCC 7421), this protein is Photosystem II protein D1 2.